The following is a 504-amino-acid chain: MEEYQVYLKLHRSRHQDLLYPLFFRESIYRLAYGHGSFFVENVGYNKKWSLLIVKRLITRMYQQIDLIIFANDSNKNPFGDSNKNFYSLIILEGFVVVVEIRFSLQFWISSLKELEIVKSYNTLRSISSIFPFFEDKLIYLNHESDIRIPYPIHLEILVQILRYWIKDVFFFHFLRLFFYYYFNSTSVFTPKKDISISFSKSNPRFFLFLYNLYVWEYESIFLFLRNKSSQLRFKYFRVFFERIFFYEKIEHLLEISAKDCLYTLSFFKDPFIHYVRYQGKSIFVSKNTPLLIKKWKYYFIYLWQCHFDIWSRSETIYLNQLSQHSFNFLGYFLSIRLNVSVVRSQMLQNSFLIQIFIKKLDTIVRILPLIRLLAKEKFCNILGHPISKPVWVNLSDFDIIDRFLQICRNFSHYYNGSEKKKSLYQIKYILRLSCIKTLARKHKSTVRTFLKRLGSEKLLEEFFTEEDIFSLIFPRTSFTLQRLYRDRIWYLDILFRNDLVNHS.

It belongs to the intron maturase 2 family. MatK subfamily.

The protein resides in the plastid. It localises to the chloroplast. Usually encoded in the trnK tRNA gene intron. Probably assists in splicing its own and other chloroplast group II introns. In Erythrina crista-galli (Cockspur coral tree), this protein is Maturase K.